The primary structure comprises 437 residues: Glutamate-1-semialdehyde 2,1-aminomutase (437 aa).

N6-(pyridoxal phosphate)lysine is present on Lys274.

It belongs to the class-III pyridoxal-phosphate-dependent aminotransferase family. HemL subfamily. In terms of assembly, homodimer. It depends on pyridoxal 5'-phosphate as a cofactor.

The protein localises to the cytoplasm. The enzyme catalyses (S)-4-amino-5-oxopentanoate = 5-aminolevulinate. Its pathway is porphyrin-containing compound metabolism; protoporphyrin-IX biosynthesis; 5-aminolevulinate from L-glutamyl-tRNA(Glu): step 2/2. In Paracidovorax citrulli (strain AAC00-1) (Acidovorax citrulli), this protein is Glutamate-1-semialdehyde 2,1-aminomutase.